The sequence spans 496 residues: MKKYILSLDQGTTSSRAILFNKKGEIVHSAQKEFTQHFPKPGWVEHNAQEIWGSILAVIATCLSEADVKPEQIAGIGITNQRETTVVWDKTTSKPIYNAIVWQSRQTAEICDELKEKGYSEMVREKTGLLIDAYFSGTKVKWILDNVEGAREKAENGDLLFGTIDSWLVWKLSGGKAHVTDYSNASRTLMFNIHDLQWDDELLEMLTVPKSMLPEVRPSSEIYGETIDYHFFGQNVPIAGVAGDQQAALFGQACFGEGMAKNTYGTGCFMLMNTGEKAVASEHGLLTTIAWGIDGKVNYALEGSIFVAGSAIQWLRDGMRMFKDASESEVYASRVESTDGVYVVPAFVGLGTPYWDSEVRGAMFGVTRGTTKEHFIRATLESLAYQTKDVLCAMEADSGIELKTLRVDGGAVKNNFLMKFQSDILDVPVERPVINETTALGAAYLAGLAVGYWKNQDEIKEQWHMDKRFEPTMEAKTSEELYAGWKKAIEATKAFK.

An ADP-binding site is contributed by T12. ATP-binding residues include T12, T13, and S14. A sn-glycerol 3-phosphate-binding site is contributed by T12. R16 contacts ADP. The sn-glycerol 3-phosphate site is built by R82, E83, and Y134. Glycerol contacts are provided by R82, E83, and Y134. Phosphohistidine; by HPr is present on H230. Residue D244 coordinates sn-glycerol 3-phosphate. 2 residues coordinate glycerol: D244 and Q245. ADP is bound by residues T266 and G309. ATP contacts are provided by T266, G309, Q313, and G410. ADP contacts are provided by G410 and N414.

Belongs to the FGGY kinase family. As to quaternary structure, homotetramer and homodimer (in equilibrium). In terms of processing, the phosphoenolpyruvate-dependent sugar phosphotransferase system (PTS), including enzyme I, and histidine-containing protein (HPr) are required for the phosphorylation, which leads to the activation of the enzyme.

It catalyses the reaction glycerol + ATP = sn-glycerol 3-phosphate + ADP + H(+). The protein operates within polyol metabolism; glycerol degradation via glycerol kinase pathway; sn-glycerol 3-phosphate from glycerol: step 1/1. Activated by phosphorylation and inhibited by fructose 1,6-bisphosphate (FBP). Key enzyme in the regulation of glycerol uptake and metabolism. Catalyzes the phosphorylation of glycerol to yield sn-glycerol 3-phosphate. The sequence is that of Glycerol kinase from Bacillus cereus (strain ATCC 14579 / DSM 31 / CCUG 7414 / JCM 2152 / NBRC 15305 / NCIMB 9373 / NCTC 2599 / NRRL B-3711).